Reading from the N-terminus, the 375-residue chain is MSTAGKVIKCKAAVLWEVMKPFSIEDVEVAPPKAYEVRIKMVTVGICGTDDHVVSGTMVTPLPVILGHEAAGIVESVGEGVTTVEPGDKVIPLALPQCGKCRICKTPERNYCLKNDVSNPRGTLQDGTSRFTCRGKPIHHFLGVSTFSQYTVVDENAVAKIDAASPMEKVCLIGCGFSTGYGSAVKVAKVTPGSTCAVFGLGGVGLSAVMGCKAAGAARIIAVDINKDKFAKAKELGATECINPQDYKKPIQEVLKEMTDGGVDFSFEVIGRLDTMMASLLCCHEACGTSVIVGVPPDSQNLSINPMLLLTGRTWKGAVYGGFKSKEDIPKLVADFMAKKFSLDALITHVLPFEKINEGFDLLRSGKSIRTILTF.

S2 carries the N-acetylserine modification. S23 carries the post-translational modification Phosphoserine. Y35 is subject to Phosphotyrosine. C47 contacts Zn(2+). 48 to 52 serves as a coordination point for NAD(+); it reads GTDDH. Zn(2+)-binding residues include H68, C98, C101, C104, C112, and C175. Residues 200 to 205, D224, K229, I270, 293 to 295, 318 to 320, and R370 contribute to the NAD(+) site; these read GLGGVG, VGV, and AVY.

This sequence belongs to the zinc-containing alcohol dehydrogenase family. As to quaternary structure, dimer of identical or heterodimer of closely related subunits alpha, beta, or gamma that are encoded by genes ADH1A, ADH1B, and ADH1C, respectively. Zn(2+) serves as cofactor.

It localises to the cytoplasm. The catalysed reaction is a primary alcohol + NAD(+) = an aldehyde + NADH + H(+). It catalyses the reaction a secondary alcohol + NAD(+) = a ketone + NADH + H(+). The enzyme catalyses butan-1-ol + NAD(+) = butanal + NADH + H(+). It carries out the reaction 1-propanol + NAD(+) = propanal + NADH + H(+). The catalysed reaction is propan-2-ol + NAD(+) = acetone + NADH + H(+). In terms of biological role, alcohol dehydrogenase. Oxidizes primary as well as secondary alcohols. Ethanol is a very poor substrate. This is Alcohol dehydrogenase 1A (ADH1A) from Macaca mulatta (Rhesus macaque).